A 260-amino-acid chain; its full sequence is Small ribosomal subunit protein uS2 (260 aa).

This sequence belongs to the universal ribosomal protein uS2 family.

The protein is Small ribosomal subunit protein uS2 of Streptococcus sanguinis (strain SK36).